The primary structure comprises 101 residues: Small ribosomal subunit protein uS14A (101 aa).

The tract at residues 32 to 71 (RRPGTPEPERNRAVEELRRQPRDASATRVRNRDSVDGRPR) is disordered. Composition is skewed to basic and acidic residues over residues 38-53 (EPERNRAVEELRRQPR) and 61-70 (RNRDSVDGRP).

This sequence belongs to the universal ribosomal protein uS14 family. In terms of assembly, part of the 30S ribosomal subunit. Contacts proteins S3 and S10.

In terms of biological role, binds 16S rRNA, required for the assembly of 30S particles and may also be responsible for determining the conformation of the 16S rRNA at the A site. This chain is Small ribosomal subunit protein uS14A, found in Streptomyces griseus subsp. griseus (strain JCM 4626 / CBS 651.72 / NBRC 13350 / KCC S-0626 / ISP 5235).